The primary structure comprises 298 residues: Tyrosine recombinase XerC (298 aa).

Positions 2-88 (TDLHTDVERY…ALRSFFDWLV (87 aa)) constitute a Core-binding (CB) domain. The region spanning 109–288 (HLPKNIDVDD…DFQHLASVYD (180 aa)) is the Tyr recombinase domain. Residues arginine 148, lysine 172, histidine 240, arginine 243, and histidine 266 contribute to the active site. The O-(3'-phospho-DNA)-tyrosine intermediate role is filled by tyrosine 275.

This sequence belongs to the 'phage' integrase family. XerC subfamily. In terms of assembly, forms a cyclic heterotetrameric complex composed of two molecules of XerC and two molecules of XerD, in which XerC interacts with XerD via its C-terminal region, XerD interacts with XerC via its C-terminal region and so on.

Its subcellular location is the cytoplasm. Its activity is regulated as follows. FtsK may regulate the catalytic switch between XerC and XerD in the heterotetrameric complex during the two steps of the recombination process. Site-specific tyrosine recombinase, which acts by catalyzing the cutting and rejoining of the recombining DNA molecules. Binds cooperatively to specific DNA consensus sequences that are separated from XerD binding sites by a short central region, forming the heterotetrameric XerC-XerD complex that recombines DNA substrates. The complex is essential to convert dimers of the bacterial chromosome into monomers to permit their segregation at cell division. It also contributes to the segregational stability of plasmids. In the complex XerC specifically exchanges the top DNA strands. This chain is Tyrosine recombinase XerC, found in Escherichia coli O127:H6 (strain E2348/69 / EPEC).